The following is a 121-amino-acid chain: NADPH-dependent 7-cyano-7-deazaguanine reductase (121 aa).

Cysteine 36 serves as the catalytic Thioimide intermediate. Catalysis depends on aspartate 43, which acts as the Proton donor. Substrate contacts are provided by residues 58 to 60 (VEL) and 77 to 78 (YE).

It belongs to the GTP cyclohydrolase I family. QueF type 1 subfamily.

The protein resides in the cytoplasm. It catalyses the reaction 7-aminomethyl-7-carbaguanine + 2 NADP(+) = 7-cyano-7-deazaguanine + 2 NADPH + 3 H(+). It participates in tRNA modification; tRNA-queuosine biosynthesis. In terms of biological role, catalyzes the NADPH-dependent reduction of 7-cyano-7-deazaguanine (preQ0) to 7-aminomethyl-7-deazaguanine (preQ1). The chain is NADPH-dependent 7-cyano-7-deazaguanine reductase from Rhodopirellula baltica (strain DSM 10527 / NCIMB 13988 / SH1).